The chain runs to 244 residues: 7-cyano-7-deazaguanine synthase (244 aa).

Residue 17-27 (FSGGQDSTTCL) participates in ATP binding. Cysteine 205, cysteine 220, cysteine 223, and cysteine 226 together coordinate Zn(2+).

It belongs to the QueC family. Requires Zn(2+) as cofactor.

The enzyme catalyses 7-carboxy-7-deazaguanine + NH4(+) + ATP = 7-cyano-7-deazaguanine + ADP + phosphate + H2O + H(+). It participates in purine metabolism; 7-cyano-7-deazaguanine biosynthesis. Catalyzes the ATP-dependent conversion of 7-carboxy-7-deazaguanine (CDG) to 7-cyano-7-deazaguanine (preQ(0)). This Bordetella pertussis (strain Tohama I / ATCC BAA-589 / NCTC 13251) protein is 7-cyano-7-deazaguanine synthase.